A 235-amino-acid polypeptide reads, in one-letter code: MFQLGSLVVLCGLLIGNSESLLGELGSAVNNLKILNPPSEAVPQNLNLDVELLQQATSWPLAKNSILETLNTADLGNLKSFTSLNGLLLKINNLKVLDFQAKLSSNGNGIDLTVPLAGEASLVLPFIGKTVDISVSLDLINSLSIKTNAQTGLPEVTIGKCSSNTDKISISLLGRRLPIINSILDGVSTLLTSTLSTVLQNFLCPLLQYVLSTLNPSVLQGLLSNLLAGQVQLAL.

Positions 1 to 20 are cleaved as a signal peptide; sequence MFQLGSLVVLCGLLIGNSES. A disulfide bridge connects residues Cys161 and Cys204.

It belongs to the BPI/LBP/Plunc superfamily. Plunc family. As to expression, predominates in the parotid glands, present in smaller amounts (1/10) in the submaxillary glands and in the sublingual glands, and at lower amount in the pancreas but undetectable in the liver. Found also in lacrimal gland.

Its subcellular location is the secreted. In terms of biological role, has strong antibacterial activity against P.aeruginosa. The protein is BPI fold-containing family A member 2 (Bpifa2) of Mus musculus (Mouse).